The following is a 209-amino-acid chain: Lipid A acyltransferase PagP (209 aa).

Positions 1 to 24 (MHLKRALITLSLITLPIIPFSSYA) are cleaved as a signal peptide. Catalysis depends on residues H81, D124, and S125.

The protein belongs to the lipid A palmitoyltransferase family. Homodimer.

Its subcellular location is the cell outer membrane. The enzyme catalyses a lipid A + a 1,2-diacyl-sn-glycero-3-phosphocholine = a hepta-acyl lipid A + a 2-acyl-sn-glycero-3-phosphocholine. It catalyses the reaction a lipid IVA + a 1,2-diacyl-sn-glycero-3-phosphocholine = a lipid IVB + a 2-acyl-sn-glycero-3-phosphocholine. It carries out the reaction a lipid IIA + a 1,2-diacyl-sn-glycero-3-phosphocholine = a lipid IIB + a 2-acyl-sn-glycero-3-phosphocholine. Functionally, transfers a fatty acid residue from the sn-1 position of a phospholipid to the N-linked hydroxyfatty acid chain on the proximal unit of lipid A or its precursors. The sequence is that of Lipid A acyltransferase PagP from Pectobacterium parmentieri (strain WPP163) (Pectobacterium wasabiae (strain WPP163)).